Reading from the N-terminus, the 633-residue chain is tRNA uridine 5-carboxymethylaminomethyl modification enzyme MnmG (633 aa).

Residues 15 to 20, I127, and S182 each bind FAD; that span reads GAGHAG. 276 to 290 contributes to the NAD(+) binding site; the sequence is GPRYCPSIEDKIVRF. Residue Q373 participates in FAD binding.

It belongs to the MnmG family. As to quaternary structure, homodimer. Heterotetramer of two MnmE and two MnmG subunits. It depends on FAD as a cofactor.

The protein localises to the cytoplasm. In terms of biological role, NAD-binding protein involved in the addition of a carboxymethylaminomethyl (cmnm) group at the wobble position (U34) of certain tRNAs, forming tRNA-cmnm(5)s(2)U34. This chain is tRNA uridine 5-carboxymethylaminomethyl modification enzyme MnmG, found in Streptococcus agalactiae serotype III (strain NEM316).